We begin with the raw amino-acid sequence, 308 residues long: Eukaryotic translation initiation factor 3 subunit G (308 aa).

Residues 1 to 23 form a disordered region; the sequence is MAPVAAPSTSQPAGGKPMNWADE. The region spanning 225 to 303 is the RRM domain; sequence PTLRVTNLSE…LILSCQWSLP (79 aa).

This sequence belongs to the eIF-3 subunit G family. In terms of assembly, component of the eukaryotic translation initiation factor 3 (eIF-3) complex.

The protein resides in the cytoplasm. RNA-binding component of the eukaryotic translation initiation factor 3 (eIF-3) complex, which is involved in protein synthesis of a specialized repertoire of mRNAs and, together with other initiation factors, stimulates binding of mRNA and methionyl-tRNAi to the 40S ribosome. The eIF-3 complex specifically targets and initiates translation of a subset of mRNAs involved in cell proliferation. This subunit can bind 18S rRNA. The sequence is that of Eukaryotic translation initiation factor 3 subunit G from Mycosarcoma maydis (Corn smut fungus).